The primary structure comprises 88 residues: uncharacterized protein (88 aa).

A signal peptide spans 1–24 (MLPRSCKDFYETLRTAVLCGQACA).

This sequence to Rhizobium NGR234A y4oL.

This is an uncharacterized protein from Sinorhizobium fredii (strain NBRC 101917 / NGR234).